The chain runs to 229 residues: Large ribosomal subunit protein uL1 (229 aa).

This sequence belongs to the universal ribosomal protein uL1 family. As to quaternary structure, part of the 50S ribosomal subunit.

Binds directly to 23S rRNA. The L1 stalk is quite mobile in the ribosome, and is involved in E site tRNA release. Functionally, protein L1 is also a translational repressor protein, it controls the translation of the L11 operon by binding to its mRNA. This Phenylobacterium zucineum (strain HLK1) protein is Large ribosomal subunit protein uL1.